The chain runs to 499 residues: Bifunctional NAD(P)H-hydrate repair enzyme Nnr (499 aa).

Residues 1 to 217 are NAD(P)H-hydrate epimerase; that stretch reads MFITSKEMRR…PEIAERICGP (217 aa). A YjeF N-terminal domain is found at 8–213; sequence MRRIELNSRW…NAGIPEIAER (206 aa). The segment at 54–58 is NADPHX 1; for epimerase activity; that stretch reads GNGGD. K(+)-binding residues include Asn-55 and Asp-124. Residues 128–134 are NADPHX 1; for epimerase activity; sequence GFGIRGR. Asp-160 is a binding site for (6S)-NADPHX. Thr-163 contributes to the K(+) binding site. The region spanning 217–485 is the YjeF C-terminal domain; it reads PGDLITSDIW…EYVPKVLRNP (269 aa). An ADP-dependent (S)-NAD(P)H-hydrate dehydratase region spans residues 217–499; it reads PGDLITSDIW…PEAVTEVRRD (283 aa). Gly-314 lines the (6S)-NADPHX pocket. Positions 360–366 are NADPHX 2; for dehydratase activity; sequence HAGEFRR. ADP is bound by residues 397–401 and 417–426; these read KGRVD and TPAMTVGGTG. Asp-427 provides a ligand contact to (6S)-NADPHX.

This sequence in the N-terminal section; belongs to the NnrE/AIBP family. It in the C-terminal section; belongs to the NnrD/CARKD family. It depends on K(+) as a cofactor.

The catalysed reaction is (6S)-NADHX + ADP = AMP + phosphate + NADH + H(+). The enzyme catalyses (6S)-NADPHX + ADP = AMP + phosphate + NADPH + H(+). It carries out the reaction (6R)-NADHX = (6S)-NADHX. It catalyses the reaction (6R)-NADPHX = (6S)-NADPHX. Bifunctional enzyme that catalyzes the epimerization of the S- and R-forms of NAD(P)HX and the dehydration of the S-form of NAD(P)HX at the expense of ADP, which is converted to AMP. This allows the repair of both epimers of NAD(P)HX, a damaged form of NAD(P)H that is a result of enzymatic or heat-dependent hydration. In Methanopyrus kandleri (strain AV19 / DSM 6324 / JCM 9639 / NBRC 100938), this protein is Bifunctional NAD(P)H-hydrate repair enzyme Nnr (nnr).